A 385-amino-acid polypeptide reads, in one-letter code: Beta-lactamase (385 aa).

The N-terminal stretch at 1 to 20 (MKRLLAFCLLFFAALGQAKV) is a signal peptide. The Acyl-ester intermediate role is filled by serine 84. Catalysis depends on tyrosine 170, which acts as the Proton acceptor. 335–337 (KTG) lines the substrate pocket.

This sequence belongs to the class-C beta-lactamase family.

It localises to the periplasm. The enzyme catalyses a beta-lactam + H2O = a substituted beta-amino acid. Functionally, this protein is a serine beta-lactamase with a substrate specificity for cephalosporins. This is Beta-lactamase from Lysobacter lactamgenus.